Reading from the N-terminus, the 301-residue chain is UDP-3-O-acyl-N-acetylglucosamine deacetylase (301 aa).

Residues His-75, His-233, and Asp-237 each coordinate Zn(2+). Residue His-260 is the Proton donor of the active site.

Belongs to the LpxC family. Zn(2+) serves as cofactor.

The enzyme catalyses a UDP-3-O-[(3R)-3-hydroxyacyl]-N-acetyl-alpha-D-glucosamine + H2O = a UDP-3-O-[(3R)-3-hydroxyacyl]-alpha-D-glucosamine + acetate. Its pathway is glycolipid biosynthesis; lipid IV(A) biosynthesis; lipid IV(A) from (3R)-3-hydroxytetradecanoyl-[acyl-carrier-protein] and UDP-N-acetyl-alpha-D-glucosamine: step 2/6. Its function is as follows. Catalyzes the hydrolysis of UDP-3-O-myristoyl-N-acetylglucosamine to form UDP-3-O-myristoylglucosamine and acetate, the committed step in lipid A biosynthesis. This chain is UDP-3-O-acyl-N-acetylglucosamine deacetylase, found in Aliarcobacter butzleri (strain RM4018) (Arcobacter butzleri).